We begin with the raw amino-acid sequence, 110 residues long: Large ribosomal subunit protein uL22 (110 aa).

This sequence belongs to the universal ribosomal protein uL22 family. In terms of assembly, part of the 50S ribosomal subunit.

In terms of biological role, this protein binds specifically to 23S rRNA; its binding is stimulated by other ribosomal proteins, e.g. L4, L17, and L20. It is important during the early stages of 50S assembly. It makes multiple contacts with different domains of the 23S rRNA in the assembled 50S subunit and ribosome. The globular domain of the protein is located near the polypeptide exit tunnel on the outside of the subunit, while an extended beta-hairpin is found that lines the wall of the exit tunnel in the center of the 70S ribosome. The protein is Large ribosomal subunit protein uL22 of Campylobacter fetus subsp. fetus (strain 82-40).